The sequence spans 319 residues: Zinc finger protein C19B12.07c (319 aa).

The segment at F146–H170 adopts a C2H2-type zinc-finger fold.

Belongs to the ZNF277 family.

It is found in the nucleus. In Schizosaccharomyces pombe (strain 972 / ATCC 24843) (Fission yeast), this protein is Zinc finger protein C19B12.07c.